The sequence spans 604 residues: Linalool synthase Tps-5073L4, chloroplastic (604 aa).

The transit peptide at 1 to 36 (MSSMRIYVAIMKKPSVKHVDYVDKKASKPSWRVSSS) directs the protein to the chloroplast. (2E)-geranyl diphosphate-binding residues include arginine 323, aspartate 360, aspartate 364, arginine 501, and aspartate 504. Positions 360 and 364 each coordinate Mg(2+). The short motif at 360 to 364 (DDVYD) is the DDXXD motif element. Mg(2+) contacts are provided by aspartate 504, threonine 508, and glutamate 512.

It belongs to the terpene synthase family. Tpsb subfamily. In terms of assembly, monomer. Requires Mg(2+) as cofactor. The cofactor is Mn(2+).

The protein resides in the plastid. It localises to the chloroplast. It carries out the reaction (2E)-geranyl diphosphate + H2O = linalool + diphosphate. Its pathway is secondary metabolite biosynthesis; terpenoid biosynthesis. Functionally, monoterpene synthase (mono-TPS) involved in the biosynthesis of monoterpenes natural products. Catalyzes the conversion of (2E)-geranyl diphosphate (GPP) into linalool. This is Linalool synthase Tps-5073L4, chloroplastic from Perilla frutescens (Beefsteak mint).